The chain runs to 331 residues: UDP-GalNAc:beta-1,3-N-acetylgalactosaminyltransferase 1 (331 aa).

The Cytoplasmic portion of the chain corresponds to 1 to 20 (MAPAVLTALPNRMSLRSLKW). Residues 21-43 (SLLLLSLLSFLVIWYLSLPHYNV) form a helical; Signal-anchor for type II membrane protein membrane-spanning segment. Over 44 to 331 (IERVNWMYFY…VMLRNTTCHY (288 aa)) the chain is Lumenal. 5 N-linked (GlcNAc...) asparagine glycosylation sites follow: Asn-72, Asn-154, Asn-198, Asn-212, and Asn-326.

It belongs to the glycosyltransferase 31 family. The cofactor is Mg(2+). Detected in brain, ovary, kidney, uterus and stomach. In ovary, specifically expressed in follicular granulosa cells and shows particularly strong expression at later stages of follicle development.

It is found in the golgi apparatus membrane. It catalyses the reaction a globoside Gb3Cer (d18:1(4E)) + UDP-N-acetyl-alpha-D-galactosamine = a globoside Gb4Cer (d18:1(4E)) + UDP + H(+). It functions in the pathway protein modification; protein glycosylation. Functionally, transfers N-acetylgalactosamine onto globotriaosylceramide. Plays a critical role in preimplantation stage embryonic development. The sequence is that of UDP-GalNAc:beta-1,3-N-acetylgalactosaminyltransferase 1 from Mus musculus (Mouse).